Consider the following 602-residue polypeptide: Protein NRT1/ PTR FAMILY 5.7 (602 aa).

The next 2 membrane-spanning stretches (helical) occupy residues 56–73 (LSYF…TTIL) and 87–107 (WSGV…AYLG). The residue at position 111 (threonine 111) is a Phosphothreonine. 10 helical membrane passes run 112 to 132 (VLLA…SWFI), 152 to 172 (IAFF…KPSL), 197 to 217 (WWNA…VYIE), 220 to 240 (IGWG…FFIF), 337 to 357 (VKLL…GVCA), 381 to 401 (IVPP…TVTI), 422 to 442 (ILQR…IAAL), 465 to 485 (IWLA…LVGL), 500 to 520 (LGIA…NLLI), and 548 to 568 (FYWM…IVAM).

Belongs to the major facilitator superfamily. Proton-dependent oligopeptide transporter (POT/PTR) (TC 2.A.17) family. Expressed in shoots, stems, leaves and flowers.

It localises to the membrane. The sequence is that of Protein NRT1/ PTR FAMILY 5.7 (NPF5.7) from Arabidopsis thaliana (Mouse-ear cress).